A 152-amino-acid polypeptide reads, in one-letter code: MVFEGFLTGEGLRVAIVAARFNELITSKLVGGANDAFRRHGVAADAVDTAWVPGAFEIPLVAEKLAKSGNYDAVITLGAVIRGATSHYDYVCNEVAKGVAGASRETGVPIIFGVLTTDSIEQAVERAGTKAGNKGYEAAVSAIEMANLLRTI.

Residues Phe-21, Ala-55–Glu-57, and Ala-79–Ile-81 each bind 5-amino-6-(D-ribitylamino)uracil. Ala-84–Thr-85 lines the (2S)-2-hydroxy-3-oxobutyl phosphate pocket. The active-site Proton donor is the His-87. Phe-112 is a binding site for 5-amino-6-(D-ribitylamino)uracil. Arg-126 serves as a coordination point for (2S)-2-hydroxy-3-oxobutyl phosphate.

This sequence belongs to the DMRL synthase family. Forms an icosahedral capsid composed of 60 subunits, arranged as a dodecamer of pentamers.

The catalysed reaction is (2S)-2-hydroxy-3-oxobutyl phosphate + 5-amino-6-(D-ribitylamino)uracil = 6,7-dimethyl-8-(1-D-ribityl)lumazine + phosphate + 2 H2O + H(+). Its pathway is cofactor biosynthesis; riboflavin biosynthesis; riboflavin from 2-hydroxy-3-oxobutyl phosphate and 5-amino-6-(D-ribitylamino)uracil: step 1/2. Functionally, catalyzes the formation of 6,7-dimethyl-8-ribityllumazine by condensation of 5-amino-6-(D-ribitylamino)uracil with 3,4-dihydroxy-2-butanone 4-phosphate. This is the penultimate step in the biosynthesis of riboflavin. The sequence is that of 6,7-dimethyl-8-ribityllumazine synthase from Exiguobacterium sibiricum (strain DSM 17290 / CCUG 55495 / CIP 109462 / JCM 13490 / 255-15).